Reading from the N-terminus, the 209-residue chain is Large ribosomal subunit protein uL3 (209 aa).

Gln-150 carries the N5-methylglutamine modification.

The protein belongs to the universal ribosomal protein uL3 family. As to quaternary structure, part of the 50S ribosomal subunit. Forms a cluster with proteins L14 and L19. Post-translationally, methylated by PrmB.

Its function is as follows. One of the primary rRNA binding proteins, it binds directly near the 3'-end of the 23S rRNA, where it nucleates assembly of the 50S subunit. The sequence is that of Large ribosomal subunit protein uL3 from Salmonella paratyphi C (strain RKS4594).